The sequence spans 532 residues: Nectin-4 (532 aa).

Positions 1 to 30 (MGPLHGALLPPISVTVSLLILLLCAPGGRC) are cleaved as a signal peptide. The 112-residue stretch at 31–142 (GVVHTEKSMT…GNFDAELELK (112 aa)) folds into the Ig-like V-type domain. The Extracellular segment spans residues 31–344 (GVVHTEKSMT…TKIDLVSVSL (314 aa)). 3 disulfides stabilise this stretch: Cys-51/Cys-125, Cys-169/Cys-221, and Cys-266/Cys-312. Ig-like C2-type domains lie at 146-235 (PPLP…KRIT) and 244-328 (AEVS…AIVS). Positions 152–179 (GPGPPLTEGEGKSLAASCTAEGNPAPTL) are disordered. Asn-189 and Asn-282 each carry an N-linked (GlcNAc...) asparagine glycan. A helical membrane pass occupies residues 345–365 (GSVGILTAVLLVVLVITLLLV). The Cytoplasmic portion of the chain corresponds to 366 to 532 (NRHHKRQTKQ…IYINGRGHLV (167 aa)). Residues 453 to 491 (QTELLSTVPDEEVKEDGEEPEQVEQSLEKEPNPTEPDGM) are disordered. The segment covering 461 to 474 (PDEEVKEDGEEPEQ) has biased composition (acidic residues).

Belongs to the nectin family.

It is found in the cell membrane. Its function is as follows. May be involved in cell adhesion. This Xenopus tropicalis (Western clawed frog) protein is Nectin-4.